A 175-amino-acid polypeptide reads, in one-letter code: Small ribosomal subunit protein uS4 (175 aa).

Residues 105–169 form the S4 RNA-binding domain; it reads RRLQTIVYRQ…SPLADSLHPA (65 aa).

The protein belongs to the universal ribosomal protein uS4 family. As to quaternary structure, part of the 30S ribosomal subunit. Contacts protein S5. The interaction surface between S4 and S5 is involved in control of translational fidelity.

One of the primary rRNA binding proteins, it binds directly to 16S rRNA where it nucleates assembly of the body of the 30S subunit. In terms of biological role, with S5 and S12 plays an important role in translational accuracy. The protein is Small ribosomal subunit protein uS4 of Haloquadratum walsbyi (strain DSM 16790 / HBSQ001).